Consider the following 311-residue polypeptide: uncharacterized protein (311 aa).

This is an uncharacterized protein from Mycoplasma genitalium (strain ATCC 33530 / DSM 19775 / NCTC 10195 / G37) (Mycoplasmoides genitalium).